We begin with the raw amino-acid sequence, 463 residues long: Glycine--tRNA ligase (463 aa).

Positions 100 and 175 each coordinate substrate. ATP contacts are provided by residues Arg-207–Glu-209, Phe-217–Phe-222, Glu-291–Leu-292, and Gly-335–Arg-338. Residue Phe-222–Glu-226 participates in substrate binding. Glu-331–Gly-335 serves as a coordination point for substrate.

Belongs to the class-II aminoacyl-tRNA synthetase family. As to quaternary structure, homodimer.

The protein localises to the cytoplasm. The enzyme catalyses tRNA(Gly) + glycine + ATP = glycyl-tRNA(Gly) + AMP + diphosphate. Functionally, catalyzes the attachment of glycine to tRNA(Gly). The protein is Glycine--tRNA ligase of Clostridium tetani (strain Massachusetts / E88).